The primary structure comprises 241 residues: MNNDQPLLKAQSPAGLAEEYIVRSIWNNHFPPGSDLPAERELAEKIGVTRTTLREVLQRLARDGWLNIQHGKPTKVNNIWETSGLNILEVLVRLDSTKLPSFISNILSARTNISAIYIQKAFKVEPQKSLEAFKDLDTLADTAEAYTNFDYDLFRKLAFASDNPVYGLILNSLKGLYTRVGLFYFANPSARELAKRFYLSLKTLCQTQQVNDVKECIRQYGKDSGVIWANMQAYLPANFNE.

Positions 11–79 (QSPAGLAEEY…HGKPTKVNNI (69 aa)) constitute an HTH gntR-type domain. The segment at residues 39–58 (ERELAEKIGVTRTTLREVLQ) is a DNA-binding region (H-T-H motif).

In terms of assembly, homodimer.

The protein resides in the cytoplasm. Its function is as follows. Multifunctional regulator of fatty acid metabolism. The protein is Fatty acid metabolism regulator protein of Pasteurella multocida (strain Pm70).